A 270-amino-acid polypeptide reads, in one-letter code: Undecaprenyl-diphosphatase 1 (270 aa).

7 helical membrane-spanning segments follow: residues 5 to 25 (YYVL…PIPI), 42 to 62 (IEGF…VLLI), 89 to 109 (FFFI…GVLF), 117 to 137 (LKGV…LWII), 192 to 212 (FSFL…ITDI), 220 to 240 (TLFV…YISL), and 250 to 270 (GNLK…LIFL).

This sequence belongs to the UppP family.

It is found in the cell membrane. It carries out the reaction di-trans,octa-cis-undecaprenyl diphosphate + H2O = di-trans,octa-cis-undecaprenyl phosphate + phosphate + H(+). Catalyzes the dephosphorylation of undecaprenyl diphosphate (UPP). Confers resistance to bacitracin. This chain is Undecaprenyl-diphosphatase 1, found in Bacillus cereus (strain ATCC 14579 / DSM 31 / CCUG 7414 / JCM 2152 / NBRC 15305 / NCIMB 9373 / NCTC 2599 / NRRL B-3711).